The sequence spans 470 residues: Calmodulin-binding receptor-like cytoplasmic kinase 1 (470 aa).

Disordered regions lie at residues 1 to 29 and 65 to 128; these read MPMRSKTPTPLRFSNGKHQRDDSEYSWTD and PTEC…SKSW. Residues 65–82 show a composition bias toward basic and acidic residues; sequence PTECRSDPGESSTHDRES. 2 stretches are compositionally biased toward polar residues: residues 83–98 and 108–121; these read TLSGWTGYSSPSSFGR and YRFSGSRFQSPGKD. In terms of domain architecture, Protein kinase spans 147-423; sequence FSSVHQIGEG…MKGIAEKLWA (277 aa). ATP contacts are provided by residues 153-161 and lysine 175; that span reads IGEGGFGTV. Residues 162–185 form a caM-binding region; that stretch reads FKGKLDDGTIVAIKRARKNNYGKS. Catalysis depends on aspartate 273, which acts as the Proton acceptor. 2 positions are modified to phosphoserine: serine 277 and serine 308. Position 309 is a phosphothreonine (threonine 309). The residue at position 322 (tyrosine 322) is a Phosphotyrosine.

This sequence belongs to the protein kinase superfamily. Ser/Thr protein kinase family. In terms of assembly, interacts with calmodulin (CaM) in a Ca(2+)-dependent manner. It depends on Mg(2+) as a cofactor. Post-translationally, autophosphorylated.

The protein resides in the cytoplasm. It carries out the reaction L-seryl-[protein] + ATP = O-phospho-L-seryl-[protein] + ADP + H(+). It catalyses the reaction L-threonyl-[protein] + ATP = O-phospho-L-threonyl-[protein] + ADP + H(+). Up-regulated by Ca(2+)/CaM. The sequence is that of Calmodulin-binding receptor-like cytoplasmic kinase 1 (CRCK1) from Arabidopsis thaliana (Mouse-ear cress).